The following is a 643-amino-acid chain: DNA-directed RNA polymerase subunit beta' (643 aa).

Positions 83, 85, 98, and 101 each coordinate Zn(2+). Residues aspartate 480, aspartate 482, and aspartate 484 each contribute to the Mg(2+) site.

It belongs to the RNA polymerase beta' chain family. RpoC1 subfamily. In plastids the minimal PEP RNA polymerase catalytic core is composed of four subunits: alpha, beta, beta', and beta''. When a (nuclear-encoded) sigma factor is associated with the core the holoenzyme is formed, which can initiate transcription. Requires Mg(2+) as cofactor. It depends on Zn(2+) as a cofactor.

It is found in the plastid. The protein localises to the organellar chromatophore. It carries out the reaction RNA(n) + a ribonucleoside 5'-triphosphate = RNA(n+1) + diphosphate. In terms of biological role, DNA-dependent RNA polymerase catalyzes the transcription of DNA into RNA using the four ribonucleoside triphosphates as substrates. This Paulinella chromatophora protein is DNA-directed RNA polymerase subunit beta'.